We begin with the raw amino-acid sequence, 101 residues long: Small ribosomal subunit protein uS10 (101 aa).

Belongs to the universal ribosomal protein uS10 family. As to quaternary structure, part of the 30S ribosomal subunit.

Functionally, involved in the binding of tRNA to the ribosomes. This is Small ribosomal subunit protein uS10 from Corynebacterium efficiens (strain DSM 44549 / YS-314 / AJ 12310 / JCM 11189 / NBRC 100395).